The primary structure comprises 255 residues: NAD kinase (255 aa).

Asp-44 functions as the Proton acceptor in the catalytic mechanism. Residues 44-45 (DG), His-49, 114-115 (NE), Asp-144, Ala-152, 155-160 (SAYNLS), and Gln-216 each bind NAD(+).

Belongs to the NAD kinase family. The cofactor is a divalent metal cation.

The protein localises to the cytoplasm. The enzyme catalyses NAD(+) + ATP = ADP + NADP(+) + H(+). In terms of biological role, involved in the regulation of the intracellular balance of NAD and NADP, and is a key enzyme in the biosynthesis of NADP. Catalyzes specifically the phosphorylation on 2'-hydroxyl of the adenosine moiety of NAD to yield NADP. This chain is NAD kinase, found in Rickettsia typhi (strain ATCC VR-144 / Wilmington).